Consider the following 300-residue polypeptide: Pleckstrin homology domain-containing family A member 3 (300 aa).

The 93-residue stretch at 1 to 93 (MEGVLYKWTN…WLVALGSSKA (93 aa)) folds into the PH domain. The tract at residues 1–100 (MEGVLYKWTN…SKACLTDTRT (100 aa)) is interaction with SACM1L. Residues 97–300 (DTRTKKEKEI…SEDTLPSFSS (204 aa)) are interaction with VAPA and VAPB. The interval 197–300 (PVSPSPVQMM…SEDTLPSFSS (104 aa)) is disordered. Phosphoserine occurs at positions 236 and 244. Over residues 279 to 290 (EESRLMAKKQSE) the composition is skewed to basic and acidic residues.

As to quaternary structure, interacts with GTP-bound ARF1. Interacts with SACM1L and VAPA and/or VAPB to form a ternary complex. As to expression, widely expressed.

It localises to the golgi apparatus. The protein localises to the trans-Golgi network membrane. Its function is as follows. Plays a role in regulation of vesicular cargo transport from the trans-Golgi network (TGN) to the plasma membrane. Regulates Golgi phosphatidylinositol 4-phosphate (PtdIns(4)P) levels and activates the PtdIns(4)P phosphatase activity of SACM1L when it binds PtdIns(4)P in 'trans' configuration. Binds preferentially to PtdIns(4)P. Negatively regulates APOB secretion from hepatocytes. In Homo sapiens (Human), this protein is Pleckstrin homology domain-containing family A member 3 (PLEKHA3).